Consider the following 342-residue polypeptide: Probable dual-specificity RNA methyltransferase RlmN (342 aa).

Catalysis depends on glutamate 91, which acts as the Proton acceptor. A Radical SAM core domain is found at 97 to 326 (YRFGNTACVS…CTVRRELGSD (230 aa)). Cysteine 104 and cysteine 331 are joined by a disulfide. 3 residues coordinate [4Fe-4S] cluster: cysteine 111, cysteine 115, and cysteine 118. S-adenosyl-L-methionine-binding positions include 157–158 (GE), serine 189, 212–214 (SLH), and asparagine 288. Cysteine 331 acts as the S-methylcysteine intermediate in catalysis.

The protein belongs to the radical SAM superfamily. RlmN family. The cofactor is [4Fe-4S] cluster.

It localises to the cytoplasm. It catalyses the reaction adenosine(2503) in 23S rRNA + 2 reduced [2Fe-2S]-[ferredoxin] + 2 S-adenosyl-L-methionine = 2-methyladenosine(2503) in 23S rRNA + 5'-deoxyadenosine + L-methionine + 2 oxidized [2Fe-2S]-[ferredoxin] + S-adenosyl-L-homocysteine. It carries out the reaction adenosine(37) in tRNA + 2 reduced [2Fe-2S]-[ferredoxin] + 2 S-adenosyl-L-methionine = 2-methyladenosine(37) in tRNA + 5'-deoxyadenosine + L-methionine + 2 oxidized [2Fe-2S]-[ferredoxin] + S-adenosyl-L-homocysteine. Specifically methylates position 2 of adenine 2503 in 23S rRNA and position 2 of adenine 37 in tRNAs. The sequence is that of Probable dual-specificity RNA methyltransferase RlmN from Thermoanaerobacter pseudethanolicus (strain ATCC 33223 / 39E) (Clostridium thermohydrosulfuricum).